Reading from the N-terminus, the 424-residue chain is Serine--tRNA ligase (424 aa).

232–234 is a binding site for L-serine; that stretch reads TAE. ATP is bound at residue 263–265; sequence RRE. Glutamate 286 is a binding site for L-serine. Residue 350 to 353 participates in ATP binding; sequence EISS. Serine 384 contributes to the L-serine binding site.

The protein belongs to the class-II aminoacyl-tRNA synthetase family. Type-1 seryl-tRNA synthetase subfamily. Homodimer. The tRNA molecule binds across the dimer.

The protein localises to the cytoplasm. It carries out the reaction tRNA(Ser) + L-serine + ATP = L-seryl-tRNA(Ser) + AMP + diphosphate + H(+). It catalyses the reaction tRNA(Sec) + L-serine + ATP = L-seryl-tRNA(Sec) + AMP + diphosphate + H(+). Its pathway is aminoacyl-tRNA biosynthesis; selenocysteinyl-tRNA(Sec) biosynthesis; L-seryl-tRNA(Sec) from L-serine and tRNA(Sec): step 1/1. Its function is as follows. Catalyzes the attachment of serine to tRNA(Ser). Is also able to aminoacylate tRNA(Sec) with serine, to form the misacylated tRNA L-seryl-tRNA(Sec), which will be further converted into selenocysteinyl-tRNA(Sec). The polypeptide is Serine--tRNA ligase (Prochlorococcus marinus subsp. pastoris (strain CCMP1986 / NIES-2087 / MED4)).